The sequence spans 435 residues: Ornithine decarboxylase (435 aa).

K76 bears the N6-(pyridoxal phosphate)lysine mark. Residues S207, G244, and E283–R286 each bind pyridoxal 5'-phosphate. F339 to D340 is a substrate binding site. Catalysis depends on C368, which acts as the Proton donor; shared with dimeric partner. D369 serves as a coordination point for substrate. Y397 provides a ligand contact to pyridoxal 5'-phosphate.

Belongs to the Orn/Lys/Arg decarboxylase class-II family. As to quaternary structure, homodimer. Only the dimer is catalytically active, as the active sites are constructed of residues from both monomers. The cofactor is pyridoxal 5'-phosphate.

It carries out the reaction L-ornithine + H(+) = putrescine + CO2. The protein operates within amine and polyamine biosynthesis; putrescine biosynthesis via L-ornithine pathway; putrescine from L-ornithine: step 1/1. Inhibited by antizyme (AZ) in response to polyamine levels. AZ inhibits the assembly of the functional homodimer by binding to ODC monomers and targeting them for ubiquitin-independent proteolytic destruction by the 26S proteasome. Functionally, catalyzes the first and rate-limiting step of polyamine biosynthesis that converts ornithine into putrescine, which is the precursor for the polyamines, spermidine and spermine. Polyamines are essential for cell proliferation and are implicated in cellular processes, ranging from DNA replication to apoptosis. The polypeptide is Ornithine decarboxylase (ODC) (Panagrellus redivivus (Microworm)).